The sequence spans 938 residues: Protein O-mannosyl-transferase Tmtc2 (938 aa).

Position 1 (methionine 1) is a topological domain, cytoplasmic. The chain crosses the membrane as a helical span at residues 2 to 22; sequence PSLEPWLWGDSCSWLGMLAML. Residues 23–34 lie on the Extracellular side of the membrane; it reads RLRLHKSNMDFT. A helical transmembrane segment spans residues 35-55; that stretch reads CLFCCSLAFVLYLNTLGAGFV. Residues 56–108 lie on the Cytoplasmic side of the membrane; that stretch reads YDDRRAILANADVSGGTPWQRSFSNDFWGTPLTDSGSHGSWRPLCVLSFRLNY. Residues 109–129 traverse the membrane as a helical segment; that stretch reads LIGGGFAPWGFHLVNNLLHCV. Over 130–139 the chain is Extracellular; that stretch reads ATALVVRVAR. Residues 140 to 160 form a helical membrane-spanning segment; that stretch reads TLLASVWAVLAAGALFAAHPI. Topologically, residues 161 to 164 are cytoplasmic; it reads HTEA. Residues 165 to 185 traverse the membrane as a helical segment; sequence VAGVVGRADLAACVCYLLTYL. At 186 to 208 the chain is on the extracellular side; sequence SYLRHMRWRESGDPRQWLALGAT. A helical membrane pass occupies residues 209–229; sequence LILAAAGLLCKETAITALLVC. The Cytoplasmic portion of the chain corresponds to 230–249; sequence ALFDVMRGLSGQVDKQRLRS. A helical transmembrane segment spans residues 250-270; that stretch reads VCIVLGALFCMAYCRLVIVPG. Topologically, residues 271–291 are extracellular; sequence PQTAFSSADNPIARTPSAWTR. The helical transmembrane segment at 292-312 threads the bilayer; sequence LLTFLYLPVFNLRLLLQPNVL. Residues 313–510 lie on the Cytoplasmic side of the membrane; that stretch reads SFDWGMDALP…HACVLIMSLS (198 aa). The tract at residues 450-480 is disordered; sequence RSSSSCSNSTNSSSSSSSSSSSSSSSSSSLS. A helical transmembrane segment spans residues 511–531; that stretch reads FLALPFLPASNLLFYVGFVVA. The Extracellular segment spans residues 532–533; that stretch reads ER. The chain crosses the membrane as a helical span at residues 534-554; the sequence is LLYLPSVGFCLLVGYGVSKLM. The Cytoplasmic segment spans residues 555-562; the sequence is SCNQRTRN. Residues 563 to 580 form a helical membrane-spanning segment; sequence ILLLSFSLLLAAMSLRTL. The Extracellular segment spans residues 581-938; that stretch reads RRNADWRDEE…NLAKLGVTNV (358 aa). TPR repeat units lie at residues 602 to 635, 636 to 669, 670 to 703, 715 to 748, 753 to 786, 788 to 821, 822 to 855, 856 to 889, and 890 to 923; these read PKAL…RPNM, ADVH…RPNL, AVAY…DGAA, SSAY…LPGL, EILY…QPNQ, AAHL…APEQ, ASVY…APND, YTLV…RPGD, and AHAH…QPGD. Residue asparagine 800 is glycosylated (N-linked (GlcNAc...) asparagine).

Belongs to the TMTC family.

Its subcellular location is the membrane. The protein localises to the endoplasmic reticulum. It catalyses the reaction a di-trans,poly-cis-dolichyl beta-D-mannosyl phosphate + L-seryl-[protein] = 3-O-(alpha-D-mannosyl)-L-seryl-[protein] + a di-trans,poly-cis-dolichyl phosphate + H(+). The enzyme catalyses a di-trans,poly-cis-dolichyl beta-D-mannosyl phosphate + L-threonyl-[protein] = 3-O-(alpha-D-mannosyl)-L-threonyl-[protein] + a di-trans,poly-cis-dolichyl phosphate + H(+). The protein operates within protein modification; protein glycosylation. In terms of biological role, transfers mannosyl residues to the hydroxyl group of serine or threonine residues. This chain is Protein O-mannosyl-transferase Tmtc2, found in Drosophila melanogaster (Fruit fly).